Here is a 170-residue protein sequence, read N- to C-terminus: Peptide deformylase (170 aa).

Positions 94 and 136 each coordinate Fe cation. Glu-137 is a catalytic residue. A Fe cation-binding site is contributed by His-140.

Belongs to the polypeptide deformylase family. It depends on Fe(2+) as a cofactor.

It catalyses the reaction N-terminal N-formyl-L-methionyl-[peptide] + H2O = N-terminal L-methionyl-[peptide] + formate. Its function is as follows. Removes the formyl group from the N-terminal Met of newly synthesized proteins. Requires at least a dipeptide for an efficient rate of reaction. N-terminal L-methionine is a prerequisite for activity but the enzyme has broad specificity at other positions. The chain is Peptide deformylase from Stenotrophomonas maltophilia (strain K279a).